We begin with the raw amino-acid sequence, 140 residues long: Ribonuclease P protein component (140 aa).

The disordered stretch occupies residues 33-54 (RALKPSSAKKSSLDTAAKTQPA).

The protein belongs to the RnpA family. As to quaternary structure, consists of a catalytic RNA component (M1 or rnpB) and a protein subunit.

The enzyme catalyses Endonucleolytic cleavage of RNA, removing 5'-extranucleotides from tRNA precursor.. Its function is as follows. RNaseP catalyzes the removal of the 5'-leader sequence from pre-tRNA to produce the mature 5'-terminus. It can also cleave other RNA substrates such as 4.5S RNA. The protein component plays an auxiliary but essential role in vivo by binding to the 5'-leader sequence and broadening the substrate specificity of the ribozyme. The polypeptide is Ribonuclease P protein component (Trichormus variabilis (strain ATCC 29413 / PCC 7937) (Anabaena variabilis)).